The primary structure comprises 194 residues: MKQRDGFLGGQLLIAMPGMNDNRFIRSVVYVCAHSDAGAMGIILNQLHHIDFPELLLHLGVISGVQKKHLSEPIKNFPVRYGGPVDPLRGFVLHSDDYTCKETVLVAEKICFTATIDILKAISCEQGPQHALIALGYAGWKPGQLETEISTNGWLISPTSPSFLFESDLSRKYDESLIRMGINPTYLVSEMGHA.

Belongs to the UPF0301 (AlgH) family.

The chain is UPF0301 protein BQ03640 from Bartonella quintana (strain Toulouse) (Rochalimaea quintana).